A 776-amino-acid chain; its full sequence is 5-methyltetrahydropteroyltriglutamate--homocysteine methyltransferase (776 aa).

Residues 16 to 19 (RELK) and Lys-112 each bind 5-methyltetrahydropteroyltri-L-glutamate. L-homocysteine is bound by residues 432 to 434 (IGS) and Glu-485. L-methionine-binding positions include 432 to 434 (IGS) and Glu-485. 5-methyltetrahydropteroyltri-L-glutamate-binding positions include 516–517 (RC) and Trp-562. Asp-600 contributes to the L-homocysteine binding site. Asp-600 serves as a coordination point for L-methionine. Glu-606 lines the 5-methyltetrahydropteroyltri-L-glutamate pocket. 3 residues coordinate Zn(2+): His-642, Cys-644, and Glu-666. The active-site Proton donor is His-695. Cys-727 provides a ligand contact to Zn(2+). A disordered region spans residues 755 to 776 (HAGAVHAGTPATRAEHAESALA). The span at 767 to 776 (RAEHAESALA) shows a compositional bias: basic and acidic residues.

This sequence belongs to the vitamin-B12 independent methionine synthase family. It depends on Zn(2+) as a cofactor.

The enzyme catalyses 5-methyltetrahydropteroyltri-L-glutamate + L-homocysteine = tetrahydropteroyltri-L-glutamate + L-methionine. It participates in amino-acid biosynthesis; L-methionine biosynthesis via de novo pathway; L-methionine from L-homocysteine (MetE route): step 1/1. Catalyzes the transfer of a methyl group from 5-methyltetrahydrofolate to homocysteine resulting in methionine formation. This chain is 5-methyltetrahydropteroyltriglutamate--homocysteine methyltransferase, found in Ralstonia nicotianae (strain ATCC BAA-1114 / GMI1000) (Ralstonia solanacearum).